Reading from the N-terminus, the 230-residue chain is Phosphatidylserine decarboxylase proenzyme (230 aa).

The Schiff-base intermediate with substrate; via pyruvic acid role is filled by Ser-186. Pyruvic acid (Ser); by autocatalysis is present on Ser-186.

This sequence belongs to the phosphatidylserine decarboxylase family. PSD-A subfamily. In terms of assembly, heterodimer of a large membrane-associated beta subunit and a small pyruvoyl-containing alpha subunit. The cofactor is pyruvate. In terms of processing, is synthesized initially as an inactive proenzyme. Formation of the active enzyme involves a self-maturation process in which the active site pyruvoyl group is generated from an internal serine residue via an autocatalytic post-translational modification. Two non-identical subunits are generated from the proenzyme in this reaction, and the pyruvate is formed at the N-terminus of the alpha chain, which is derived from the carboxyl end of the proenzyme. The post-translation cleavage follows an unusual pathway, termed non-hydrolytic serinolysis, in which the side chain hydroxyl group of the serine supplies its oxygen atom to form the C-terminus of the beta chain, while the remainder of the serine residue undergoes an oxidative deamination to produce ammonia and the pyruvoyl prosthetic group on the alpha chain.

It localises to the cell membrane. The enzyme catalyses a 1,2-diacyl-sn-glycero-3-phospho-L-serine + H(+) = a 1,2-diacyl-sn-glycero-3-phosphoethanolamine + CO2. It functions in the pathway phospholipid metabolism; phosphatidylethanolamine biosynthesis; phosphatidylethanolamine from CDP-diacylglycerol: step 2/2. Functionally, catalyzes the formation of phosphatidylethanolamine (PtdEtn) from phosphatidylserine (PtdSer). The chain is Phosphatidylserine decarboxylase proenzyme from Wolbachia pipientis wMel.